The chain runs to 1013 residues: Adhesion G-protein coupled receptor G2 (1013 aa).

Positions 1 to 37 (MLFSGGQYSPVGRPEEVLLIYKIFLVIICFHAILVTS) are cleaved as a signal peptide. At 38 to 623 (LKENAGNSSL…TSLPPSQMMA (586 aa)) the chain is on the extracellular side. N44, N78, N92, N104, N128, N137, N155, N179, N187, N366, N431, N452, N457, N524, N538, N543, N547, and N593 each carry an N-linked (GlcNAc...) asparagine glycan. The GAIN-B domain maps to 457 to 615 (NTTTFAAQDP…GILLDLSRTS (159 aa)). 2 disulfide bridges follow: C566–C597 and C585–C599. Positions 566-615 (CVFWDLNRNGGRGGWSSDGCSVKEKRMNETICTCSHLTSFGILLDLSRTS) are GPS. The tract at residues 604 to 615 (SFGILLDLSRTS) is stachel. A helical transmembrane segment spans residues 624–644 (LTFITYIGCGLSSIFLSVTLV). Topologically, residues 645–663 (TYIAFEKIRRDYPSKILIQ) are cytoplasmic. The helical transmembrane segment at 664-684 (LCAALLLLNLVFLLDSWIALY) threads the bilayer. Residues 685–688 (NARG) lie on the Extracellular side of the membrane. The chain crosses the membrane as a helical span at residues 689–709 (FCISVAVFLHYFLLVSFTWMG). An intrachain disulfide couples C690 to C774. Residues 710-733 (LEAFHMYLALVKVFNTYIRKYILK) are Cytoplasmic-facing. Residues 734–754 (FCIVGWGIPAVVVSIVLTISP) form a helical membrane-spanning segment. The Extracellular segment spans residues 755–785 (DNYGIGSYGKFPNGTPDDFCWINSSVVFYIT). An N-linked (GlcNAc...) asparagine glycan is attached at N777. The helical transmembrane segment at 786–806 (VVGYFCVIFLLNVSMFIVVLV) threads the bilayer. At 807–830 (QLCRIKKKKQLGAQRKTSIQDLRS) the chain is on the cytoplasmic side. The chain crosses the membrane as a helical span at residues 831-851 (IAGLTFLLGITWGFAFFAWGP). Residues 852-853 (VN) are Extracellular-facing. An N-linked (GlcNAc...) asparagine glycan is attached at N853. A helical membrane pass occupies residues 854–874 (LTFMYLFAIFNTLQGFFIFIF). Residue N864 coordinates 3beta-hydroxyandrost-5-en-17-one. The Cytoplasmic segment spans residues 875-1013 (YCAAKENVRK…RGSLHFIEQM (139 aa)). S1006 bears the Phosphoserine mark.

This sequence belongs to the G-protein coupled receptor 2 family. Adhesion G-protein coupled receptor (ADGR) subfamily. In terms of assembly, heterodimer of 2 chains generated by proteolytic processing; the large extracellular N-terminal fragment and the membrane-bound C-terminal fragment predominantly remain associated and non-covalently linked. Interacts with CFTR. Proteolytically cleaved into 2 subunits, an extracellular subunit and a seven-transmembrane subunit. Post-translationally, highly glycosylated. As to expression, epididymis-specific expression (at protein level). Associated with apical membranes of efferent ductule and proximal epididymal duct epithelia.

It localises to the apical cell membrane. Forms a heterodimer of 2 chains generated by proteolytic processing that remain associated through non-covalent interactions mediated by the GAIN-B domain. In the inactivated receptor, the Stachel sequence (also named stalk) is embedded in the GAIN-B domain, where it adopts a beta-strand conformation. On activation, the Stachel moves into the 7 transmembrane region and adopts a twisted hook-shaped configuration that forms contacts within the receptor, leading to coupling of a G-alpha protein, which activates signaling. The cleaved GAIN-B and N-terminal domains can then dissociate from the rest of the receptor. Deoxycorticosterone (DOC) acts as an antagonist of ADGRG2. Its function is as follows. Adhesion G-protein coupled receptor (aGPCR) for steroid hormones, such as dehydroepiandrosterone (DHEA; also named 3beta-hydroxyandrost-5-en-17-one) and androstenedione. Involved in a signal transduction pathway controlling epididymal function and male fertility. Ligand binding causes a conformation change that triggers signaling via guanine nucleotide-binding proteins (G proteins) and modulates the activity of downstream effectors, such as adenylate cyclase. ADGRG2 is coupled to G(s) G proteins and mediates activation of adenylate cyclase activity. Also able to couple with G(q) G proteins in vitro. May regulate fluid exchange within epididymis. The protein is Adhesion G-protein coupled receptor G2 of Rattus norvegicus (Rat).